The sequence spans 173 residues: MPTGKRKGDVESTKFDLVLRPETITFENFRIGWFYTEARLVIKNPTKNRYTYKIKVTNNDMFDIRTPKGFIDPETSIEIELLHVPGILLPRNDVHHFSVYYIKCDTEAQNSHSIWTSKKSEGCKHVLIRFPNKIIRTQEMKKMEEDDMKQQKERNKLSNEKMGIRNQNMGEKK.

The MSP domain occupies 16–133 (DLVLRPETIT…KHVLIRFPNK (118 aa)). Over residues 141–163 (KKMEEDDMKQQKERNKLSNEKMG) the composition is skewed to basic and acidic residues. The disordered stretch occupies residues 141–173 (KKMEEDDMKQQKERNKLSNEKMGIRNQNMGEKK).

This is an uncharacterized protein from Caenorhabditis elegans.